We begin with the raw amino-acid sequence, 229 residues long: Flagellar L-ring protein (229 aa).

The signal sequence occupies residues 1–25 (MKQVRLLPSAPVRAVCALAVAALAG). Cysteine 26 carries N-palmitoyl cysteine lipidation. Cysteine 26 is lipidated: S-diacylglycerol cysteine.

This sequence belongs to the FlgH family. In terms of assembly, the basal body constitutes a major portion of the flagellar organelle and consists of four rings (L,P,S, and M) mounted on a central rod.

It is found in the cell outer membrane. Its subcellular location is the bacterial flagellum basal body. In terms of biological role, assembles around the rod to form the L-ring and probably protects the motor/basal body from shearing forces during rotation. In Burkholderia ambifaria (strain MC40-6), this protein is Flagellar L-ring protein.